Consider the following 389-residue polypeptide: Succinate--CoA ligase [ADP-forming] subunit beta (389 aa).

Positions 9–236 (KELFAKHEVP…KDATDPLELK (228 aa)) constitute an ATP-grasp domain. ATP contacts are provided by residues Lys-45, 52–54 (GRG), Ser-94, and Glu-99. The Mg(2+) site is built by Asn-191 and Asp-205. Residues Asn-256 and 318-320 (GIT) contribute to the substrate site.

This sequence belongs to the succinate/malate CoA ligase beta subunit family. As to quaternary structure, heterotetramer of two alpha and two beta subunits. It depends on Mg(2+) as a cofactor.

It carries out the reaction succinate + ATP + CoA = succinyl-CoA + ADP + phosphate. The catalysed reaction is GTP + succinate + CoA = succinyl-CoA + GDP + phosphate. The protein operates within carbohydrate metabolism; tricarboxylic acid cycle; succinate from succinyl-CoA (ligase route): step 1/1. Its function is as follows. Succinyl-CoA synthetase functions in the citric acid cycle (TCA), coupling the hydrolysis of succinyl-CoA to the synthesis of either ATP or GTP and thus represents the only step of substrate-level phosphorylation in the TCA. The beta subunit provides nucleotide specificity of the enzyme and binds the substrate succinate, while the binding sites for coenzyme A and phosphate are found in the alpha subunit. This chain is Succinate--CoA ligase [ADP-forming] subunit beta, found in Rhodococcus opacus (strain B4).